The chain runs to 442 residues: tRNA-2-methylthio-N(6)-dimethylallyladenosine synthase (442 aa).

An MTTase N-terminal domain is found at 3–120; that stretch reads KKLYIETHGC…LPEMIDAARI (118 aa). [4Fe-4S] cluster-binding residues include C12, C49, C83, C157, C161, and C164. Positions 143-375 constitute a Radical SAM core domain; it reads RIDGPSAYVS…QHRLNQQGFE (233 aa). A TRAM domain is found at 378–442; the sequence is RQMVGSVQRI…PHSLRGSLIQ (65 aa).

Belongs to the methylthiotransferase family. MiaB subfamily. Monomer. Requires [4Fe-4S] cluster as cofactor.

Its subcellular location is the cytoplasm. It catalyses the reaction N(6)-dimethylallyladenosine(37) in tRNA + (sulfur carrier)-SH + AH2 + 2 S-adenosyl-L-methionine = 2-methylsulfanyl-N(6)-dimethylallyladenosine(37) in tRNA + (sulfur carrier)-H + 5'-deoxyadenosine + L-methionine + A + S-adenosyl-L-homocysteine + 2 H(+). Its function is as follows. Catalyzes the methylthiolation of N6-(dimethylallyl)adenosine (i(6)A), leading to the formation of 2-methylthio-N6-(dimethylallyl)adenosine (ms(2)i(6)A) at position 37 in tRNAs that read codons beginning with uridine. The protein is tRNA-2-methylthio-N(6)-dimethylallyladenosine synthase of Pseudomonas fluorescens (strain Pf0-1).